The primary structure comprises 534 residues: Fimbrial subunit type 2 (534 aa).

Residues 1 to 32 (MKYNTSTLGRRAAAAAGVLTLAVLGLAPMAQA) form the signal peptide. 2 disordered regions span residues 56–76 (GDGN…GKGA) and 329–376 (TYAE…DKDG). A compositionally biased stretch (pro residues) spans 334-347 (PPAPETPPANPDNP). Basic and acidic residues predominate over residues 361–376 (TIKKVDGNDRSGDKDG). The short motif at 492 to 496 (LPLTG) is the LPXTG sorting signal element. Threonine 495 bears the Pentaglycyl murein peptidoglycan amidated threonine mark. Residues 496–534 (GANGMLILTASGAALLMIAVGSVLVARYRERKRNRDLAA) constitute a propeptide, removed by sortase.

It is found in the secreted. The protein resides in the cell wall. Its subcellular location is the fimbrium. In terms of biological role, major fimbrial subunit of A.naeslundii. The chain is Fimbrial subunit type 2 from Actinomyces naeslundii.